The chain runs to 315 residues: MLRRQFHSGCVQLARTRYTKPKPKNTETRAKEQIRLPTQQTHHSNELRIQPPIPPSTKNIVVPDDHPLWQFFSDKKFMRRPEDLDTTSRAWSIPELRRKSFEDLHSLWYTCLKERNILARENHLLKNAAKNNRNDYEDISEKIRTTMWRIRHVLSERDWAFKRARETFAQNKELQDNLVDDFKKEFLELDSSEDEQAFEMLTRFQEALFGIHEVIEDNVVDRKFVDGLKLVATLKLQRFQSRNDSINAILEESDGQINDVGEAFVVFTADNNLKAVEEACDAIKELRQGENGVSRFDELPTVRGYLKRLVSATTV.

Belongs to the universal ribosomal protein uL29 family. In terms of assembly, component of the mitochondrial large ribosomal subunit. Mature mitochondrial ribosomes consist of a small (37S) and a large (54S) subunit. The 37S subunit contains at least 33 different proteins and 1 molecule of RNA (15S). The 54S subunit contains at least 45 different proteins and 1 molecule of RNA (21S).

It localises to the mitochondrion. The chain is Large ribosomal subunit protein uL29m (MRPL4) from Candida glabrata (strain ATCC 2001 / BCRC 20586 / JCM 3761 / NBRC 0622 / NRRL Y-65 / CBS 138) (Yeast).